Reading from the N-terminus, the 179-residue chain is MLGLAAEENVLRIHIDELVFGLIAFAVIFALVYRYAVPRVTKMLDERADAIEGGIERAKKAEAEAEELRQQFQEKLEEAHRSYAAELQKASEQSAAIIAEAREEAQAEARRIIEAAHAQIEADRQQAMAQLRAEIGALSADLAARIVGETLSDPAAQSRVIDRFLAELESGANQQAEVR.

Residues 13-33 form a helical membrane-spanning segment; sequence IHIDELVFGLIAFAVIFALVY.

The protein belongs to the ATPase B chain family. F-type ATPases have 2 components, F(1) - the catalytic core - and F(0) - the membrane proton channel. F(1) has five subunits: alpha(3), beta(3), gamma(1), delta(1), epsilon(1). F(0) has three main subunits: a(1), b(2) and c(10-14). The alpha and beta chains form an alternating ring which encloses part of the gamma chain. F(1) is attached to F(0) by a central stalk formed by the gamma and epsilon chains, while a peripheral stalk is formed by the delta and b chains.

It is found in the cell membrane. F(1)F(0) ATP synthase produces ATP from ADP in the presence of a proton or sodium gradient. F-type ATPases consist of two structural domains, F(1) containing the extramembraneous catalytic core and F(0) containing the membrane proton channel, linked together by a central stalk and a peripheral stalk. During catalysis, ATP synthesis in the catalytic domain of F(1) is coupled via a rotary mechanism of the central stalk subunits to proton translocation. Functionally, component of the F(0) channel, it forms part of the peripheral stalk, linking F(1) to F(0). The protein is ATP synthase subunit b of Thermobifida fusca (strain YX).